Consider the following 150-residue polypeptide: MPAPILDIFVDGACKGNPGIGGWGVLMRYGQHEKVLMGAQWHTTNNRMELTAAIEALKAIKRPCPILISTDSVYVKNGITHWLPVWKKNNWRNASKKPIKNIELWQALDQLNQRYEIEWRWVKGHAGNPGNEIADELANRAIESLRQKTS.

An RNase H type-1 domain is found at 2 to 143; sequence PAPILDIFVD…ADELANRAIE (142 aa). Residues Asp-11, Glu-49, Asp-71, and Asp-135 each contribute to the Mg(2+) site.

It belongs to the RNase H family. In terms of assembly, monomer. The cofactor is Mg(2+).

The protein resides in the cytoplasm. The enzyme catalyses Endonucleolytic cleavage to 5'-phosphomonoester.. Endonuclease that specifically degrades the RNA of RNA-DNA hybrids. The polypeptide is Ribonuclease H (Dichelobacter nodosus (strain VCS1703A)).